The chain runs to 140 residues: Nucleoside diphosphate kinase (140 aa).

ATP contacts are provided by Lys-11, Phe-59, Arg-87, Thr-93, Arg-104, and Asn-114. The active-site Pros-phosphohistidine intermediate is the His-117.

This sequence belongs to the NDK family. Homotetramer. Mg(2+) is required as a cofactor.

Its subcellular location is the cytoplasm. The enzyme catalyses a 2'-deoxyribonucleoside 5'-diphosphate + ATP = a 2'-deoxyribonucleoside 5'-triphosphate + ADP. It carries out the reaction a ribonucleoside 5'-diphosphate + ATP = a ribonucleoside 5'-triphosphate + ADP. Functionally, major role in the synthesis of nucleoside triphosphates other than ATP. The ATP gamma phosphate is transferred to the NDP beta phosphate via a ping-pong mechanism, using a phosphorylated active-site intermediate. The protein is Nucleoside diphosphate kinase of Sphingopyxis alaskensis (strain DSM 13593 / LMG 18877 / RB2256) (Sphingomonas alaskensis).